Reading from the N-terminus, the 1284-residue chain is Peroxisomal ATPase PEX1 (1284 aa).

The disordered stretch occupies residues Ser-339–Arg-373. Over residues Gln-343–Arg-373 the composition is skewed to basic and acidic residues. ATP is bound by residues Gly-600–Ser-607 and Gly-882–Thr-889. Phosphoserine is present on residues Ser-1182, Ser-1210, and Ser-1212. Residues Phe-1261–Ala-1284 are disordered. Polar residues predominate over residues Gln-1270–Ala-1284.

The protein belongs to the AAA ATPase family. Homooligomer; homooligomerizes in the cytosol, interaction with PEX6 promotes dissociation of the homooligomer. Interacts with PEX6; forming the PEX1-PEX6 AAA ATPase complex, which is composed of a heterohexamer formed by a trimer of PEX1-PEX6 dimers. Interacts indirectly with PEX26, via its interaction with PEX6.

It is found in the cytoplasm. The protein resides in the cytosol. Its subcellular location is the peroxisome membrane. It catalyses the reaction ATP + H2O = ADP + phosphate + H(+). Component of the PEX1-PEX6 AAA ATPase complex, a protein dislocase complex that mediates the ATP-dependent extraction of the PEX5 receptor from peroxisomal membranes, an essential step for PEX5 recycling. Specifically recognizes PEX5 monoubiquitinated at 'Cys-11', and pulls it out of the peroxisome lumen through the PEX2-PEX10-PEX12 retrotranslocation channel. Extraction by the PEX1-PEX6 AAA ATPase complex is accompanied by unfolding of the TPR repeats and release of bound cargo from PEX5. This is Peroxisomal ATPase PEX1 from Mus musculus (Mouse).